Consider the following 219-residue polypeptide: Uracil-DNA glycosylase (219 aa).

Asp-63 serves as the catalytic Proton acceptor.

Belongs to the uracil-DNA glycosylase (UDG) superfamily. UNG family.

It localises to the cytoplasm. It carries out the reaction Hydrolyzes single-stranded DNA or mismatched double-stranded DNA and polynucleotides, releasing free uracil.. Excises uracil residues from the DNA which can arise as a result of misincorporation of dUMP residues by DNA polymerase or due to deamination of cytosine. This chain is Uracil-DNA glycosylase, found in Mesomycoplasma hyopneumoniae (strain 7448) (Mycoplasma hyopneumoniae).